A 311-amino-acid polypeptide reads, in one-letter code: Methionyl-tRNA formyltransferase (311 aa).

114-117 (SLLP) is a (6S)-5,6,7,8-tetrahydrofolate binding site.

Belongs to the Fmt family.

The catalysed reaction is L-methionyl-tRNA(fMet) + (6R)-10-formyltetrahydrofolate = N-formyl-L-methionyl-tRNA(fMet) + (6S)-5,6,7,8-tetrahydrofolate + H(+). Its function is as follows. Attaches a formyl group to the free amino group of methionyl-tRNA(fMet). The formyl group appears to play a dual role in the initiator identity of N-formylmethionyl-tRNA by promoting its recognition by IF2 and preventing the misappropriation of this tRNA by the elongation apparatus. The polypeptide is Methionyl-tRNA formyltransferase (Corynebacterium diphtheriae (strain ATCC 700971 / NCTC 13129 / Biotype gravis)).